Here is a 540-residue protein sequence, read N- to C-terminus: Pentatricopeptide repeat-containing protein At1g14470 (540 aa).

14 PPR repeats span residues 70–104 (NVFV…GIMP), 105–134 (DAFS…GFFK), 135–165 (DPYV…ISQR), 166–196 (KGSD…MPEN), 197–227 (DVVS…MPEK), 228–262 (SVVS…GVRP), 263–297 (NETT…RVRL), 298–328 (NCFV…LGTQ), 330–364 (NLVT…NVVS), 365–395 (WNSL…GDSK), 397–431 (DEVT…QIKL), 432–462 (NDSG…MKER), 463–497 (DVVS…GIEP), and 498–528 (DRVT…IRNP).

Belongs to the PPR family. PCMP-A subfamily.

The sequence is that of Pentatricopeptide repeat-containing protein At1g14470 (PCMP-A4) from Arabidopsis thaliana (Mouse-ear cress).